A 341-amino-acid polypeptide reads, in one-letter code: Long-chain acyl-[acyl-carrier-protein] reductase (341 aa).

Belongs to the short-chain dehydrogenases/reductases (SDR) family. The cofactor is a divalent metal cation.

It carries out the reaction a long-chain fatty aldehyde + holo-[ACP] + NADP(+) = a long-chain fatty acyl-[ACP] + NADPH + H(+). The enzyme catalyses a long-chain fatty aldehyde + holo-[ACP] + NAD(+) = a long-chain fatty acyl-[ACP] + NADH + H(+). Its function is as follows. Catalyzes the NADP-dependent reduction of long-chain acyl-ACP to the corresponding fatty aldehyde. Involved in the biosynthesis of alkanes, mainly heptadecane and pentadecane, by producing the fatty aldehydes used by aldehyde decarbonylase. The chain is Long-chain acyl-[acyl-carrier-protein] reductase from Synechococcus elongatus (strain ATCC 33912 / PCC 7942 / FACHB-805) (Anacystis nidulans R2).